The sequence spans 358 residues: Protein RecA (358 aa).

ATP is bound at residue 76–83; the sequence is GPESSGKT.

The protein belongs to the RecA family.

It localises to the cytoplasm. In terms of biological role, can catalyze the hydrolysis of ATP in the presence of single-stranded DNA, the ATP-dependent uptake of single-stranded DNA by duplex DNA, and the ATP-dependent hybridization of homologous single-stranded DNAs. It interacts with LexA causing its activation and leading to its autocatalytic cleavage. The sequence is that of Protein RecA from Rhodospirillum centenum (strain ATCC 51521 / SW).